A 132-amino-acid polypeptide reads, in one-letter code: Small ribosomal subunit protein eS17B (132 aa).

Ser43 bears the Phosphoserine mark.

This sequence belongs to the eukaryotic ribosomal protein eS17 family. Component of the small ribosomal subunit (SSU). Mature yeast ribosomes consist of a small (40S) and a large (60S) subunit. The 40S small subunit contains 1 molecule of ribosomal RNA (18S rRNA) and at least 33 different proteins. The large 60S subunit contains 3 rRNA molecules (25S, 5.8S and 5S rRNA) and at least 46 different proteins.

It is found in the cytoplasm. Component of the ribosome, a large ribonucleoprotein complex responsible for the synthesis of proteins in the cell. The small ribosomal subunit (SSU) binds messenger RNAs (mRNAs) and translates the encoded message by selecting cognate aminoacyl-transfer RNA (tRNA) molecules. The large subunit (LSU) contains the ribosomal catalytic site termed the peptidyl transferase center (PTC), which catalyzes the formation of peptide bonds, thereby polymerizing the amino acids delivered by tRNAs into a polypeptide chain. The nascent polypeptides leave the ribosome through a tunnel in the LSU and interact with protein factors that function in enzymatic processing, targeting, and the membrane insertion of nascent chains at the exit of the ribosomal tunnel. This Schizosaccharomyces pombe (strain 972 / ATCC 24843) (Fission yeast) protein is Small ribosomal subunit protein eS17B (rps1702).